A 458-amino-acid chain; its full sequence is Ammonium transporter Rh type B (458 aa).

The Cytoplasmic portion of the chain corresponds to 1 to 13 (MAGSPSRAAGRRL). A helical transmembrane segment spans residues 14–34 (QLPLLCLFLQGATAVLFAVFV). Residues 35–61 (RYNHKTDAALWHRGNYSNADNEFYFRY) are Extracellular-facing. N-linked (GlcNAc...) asparagine glycosylation is present at Asn-49. A helical membrane pass occupies residues 62–82 (PSFQDVHAMVFVGFGFLMVFL). Residues 83–86 (QRYG) are Cytoplasmic-facing. Residues 87–107 (FSSVGFTFLLAAFALQWSTLV) form a helical membrane-spanning segment. The Extracellular portion of the chain corresponds to 108–124 (QGFLHSFHSGHIHVGVE). A helical membrane pass occupies residues 125–145 (SMINADFCAGAVLISFGAVLG). The Cytoplasmic portion of the chain corresponds to 146–149 (KTGP). Residues 150 to 170 (AQLLLMALLEVVLFGINEFVL) form a helical membrane-spanning segment. The Extracellular segment spans residues 171–178 (LHLLGVRD). The helical transmembrane segment at 179-201 (AGGSMTIHTFGAYFGLVLSRVLY) threads the bilayer. The Cytoplasmic portion of the chain corresponds to 202-219 (RPQLEKSKHRQGSVYHSD). Residues 220-240 (LFAMIGTIFLWIFWPSFNSAL) traverse the membrane as a helical segment. The Extracellular portion of the chain corresponds to 241–251 (TALGAGQHRTA). Residues 252–272 (LNTYYSLAASTLGTFALSALV) form a helical membrane-spanning segment. Residues 273–282 (GEDGRLDMVH) lie on the Cytoplasmic side of the membrane. The chain crosses the membrane as a helical span at residues 283–303 (IQNAALAGGVVVGTSSEMMLT). A topological domain (extracellular) is located at residue Pro-304. Residues 305 to 325 (FGALAAGFLAGTVSTLGYKFF) traverse the membrane as a helical segment. The Cytoplasmic portion of the chain corresponds to 326–346 (TPILESKFKVQDTCGVHNLHG). A helical membrane pass occupies residues 347-367 (MPGVLGALLGVLVAGLATHEA). Residues 368-393 (YGDGLESVFPLIAEGQRSATSQAMLQ) are Extracellular-facing. Residues 394–414 (LFGLFVTLMFASVGGGLGGLL) form a helical membrane-spanning segment. At 415-458 (LKLPFLDSPPDSQCYEDQVHWQVPGEHEDEAQRPLRVEEADTQA) the chain is on the cytoplasmic side. The segment at 416–424 (KLPFLDSPP) is interaction with ANK3. The Basolateral sorting signal motif lies at 429 to 432 (YEDQ). The segment at 439–458 (GEHEDEAQRPLRVEEADTQA) is disordered. Over residues 444–458 (EAQRPLRVEEADTQA) the composition is skewed to basic and acidic residues.

The protein belongs to the ammonium transporter (TC 2.A.49) family. Rh subfamily. As to quaternary structure, interacts (via C-terminus) with ANK2 and ANK3; required for targeting to the basolateral membrane. N-glycosylated.

The protein localises to the cell membrane. It localises to the basolateral cell membrane. It carries out the reaction NH4(+)(in) = NH4(+)(out). The enzyme catalyses methylamine(out) = methylamine(in). It catalyses the reaction CO2(out) = CO2(in). In terms of biological role, ammonium transporter involved in the maintenance of acid-base homeostasis. Transports ammonium and its related derivative methylammonium across the basolateral plasma membrane of epithelial cells likely contributing to renal transepithelial ammonia transport and ammonia metabolism. May transport either NH4(+) or NH3 ammonia species predominantly mediating an electrogenic NH4(+) transport. May act as a CO2 channel providing for renal acid secretion. In Papio hamadryas (Hamadryas baboon), this protein is Ammonium transporter Rh type B (RHBG).